The primary structure comprises 171 residues: NADH-quinone oxidoreductase subunit I 1 (171 aa).

4Fe-4S ferredoxin-type domains lie at 39–71 and 81–110; these read IVLT…LTKA and EHFR…LTPD. Residues C51, C54, C57, C61, C90, C93, C96, and C100 each coordinate [4Fe-4S] cluster.

It belongs to the complex I 23 kDa subunit family. NDH-1 is composed of 14 different subunits. Subunits NuoA, H, J, K, L, M, N constitute the membrane sector of the complex. [4Fe-4S] cluster serves as cofactor.

The protein resides in the cell inner membrane. It carries out the reaction a quinone + NADH + 5 H(+)(in) = a quinol + NAD(+) + 4 H(+)(out). Functionally, NDH-1 shuttles electrons from NADH, via FMN and iron-sulfur (Fe-S) centers, to quinones in the respiratory chain. The immediate electron acceptor for the enzyme in this species is believed to be ubiquinone. Couples the redox reaction to proton translocation (for every two electrons transferred, four hydrogen ions are translocated across the cytoplasmic membrane), and thus conserves the redox energy in a proton gradient. The chain is NADH-quinone oxidoreductase subunit I 1 from Rhodopseudomonas palustris (strain BisB5).